The following is a 266-amino-acid chain: Small ribosomal subunit protein uS3 (266 aa).

Residues 39 to 107 (VREYLKKKLK…PVHVNIEEIR (69 aa)) form the KH type-2 domain. Positions 218–266 (EVAEDKRPRRNARPGDRRPRRDGEGGAPGARRGAPRRGAGKPEDGKTGE) are disordered. Composition is skewed to basic and acidic residues over residues 230 to 241 (RPGDRRPRRDGE) and 257 to 266 (GKPEDGKTGE).

Belongs to the universal ribosomal protein uS3 family. In terms of assembly, part of the 30S ribosomal subunit. Forms a tight complex with proteins S10 and S14.

Its function is as follows. Binds the lower part of the 30S subunit head. Binds mRNA in the 70S ribosome, positioning it for translation. The polypeptide is Small ribosomal subunit protein uS3 (Burkholderia ambifaria (strain MC40-6)).